A 284-amino-acid polypeptide reads, in one-letter code: Avenin-like b6 (284 aa).

The N-terminal stretch at Met1 to Ala18 is a signal peptide.

Belongs to the prolamin family. Post-translationally, contains disulfide bonds.

Seed storage protein. Might be integrated via inter-chain disulfide bonds within the glutenin polymer. The sequence is that of Avenin-like b6 from Triticum aestivum (Wheat).